We begin with the raw amino-acid sequence, 209 residues long: Large ribosomal subunit protein uL3 (209 aa).

Residues 133–152 are disordered; sequence THGNSLSHRVPGSIGQNQTP. The residue at position 150 (Q150) is an N5-methylglutamine.

This sequence belongs to the universal ribosomal protein uL3 family. Part of the 50S ribosomal subunit. Forms a cluster with proteins L14 and L19. In terms of processing, methylated by PrmB.

Its function is as follows. One of the primary rRNA binding proteins, it binds directly near the 3'-end of the 23S rRNA, where it nucleates assembly of the 50S subunit. The polypeptide is Large ribosomal subunit protein uL3 (Sodalis glossinidius (strain morsitans)).